Reading from the N-terminus, the 195-residue chain is Imidazoleglycerol-phosphate dehydratase (195 aa).

This sequence belongs to the imidazoleglycerol-phosphate dehydratase family.

The protein localises to the cytoplasm. It catalyses the reaction D-erythro-1-(imidazol-4-yl)glycerol 3-phosphate = 3-(imidazol-4-yl)-2-oxopropyl phosphate + H2O. It functions in the pathway amino-acid biosynthesis; L-histidine biosynthesis; L-histidine from 5-phospho-alpha-D-ribose 1-diphosphate: step 6/9. The chain is Imidazoleglycerol-phosphate dehydratase from Heliobacterium modesticaldum (strain ATCC 51547 / Ice1).